A 373-amino-acid polypeptide reads, in one-letter code: 3 beta-hydroxysteroid dehydrogenase/Delta 5--&gt;4-isomerase type 2 (373 aa).

The active-site Proton acceptor is Y155. K159 is a binding site for NAD(+). Residues 288–308 traverse the membrane as a helical segment; it reads VALLYWLGFLLELVNFLLRPV.

The protein belongs to the 3-beta-HSD family. High levels in adrenal gland, kidney and male liver. Low levels in female liver.

The protein localises to the endoplasmic reticulum membrane. It is found in the mitochondrion membrane. It catalyses the reaction a 3beta-hydroxy-Delta(5)-steroid + NAD(+) = a 3-oxo-Delta(5)-steroid + NADH + H(+). The catalysed reaction is a 3-oxo-Delta(5)-steroid = a 3-oxo-Delta(4)-steroid. It carries out the reaction pregnenolone + NAD(+) = pregn-5-ene-3,20-dione + NADH + H(+). The enzyme catalyses pregn-5-ene-3,20-dione = progesterone. It catalyses the reaction 3beta-hydroxyandrost-5-en-17-one + NAD(+) = androst-5-ene-3,17-dione + NADH + H(+). The catalysed reaction is androst-5-ene-3,17-dione = androst-4-ene-3,17-dione. The protein operates within lipid metabolism; steroid biosynthesis. Functionally, 3-beta-HSD is a bifunctional enzyme, that catalyzes the oxidative conversion of Delta(5)-ene-3-beta-hydroxy steroid, and the oxidative conversion of ketosteroids. The 3-beta-HSD enzymatic system plays a crucial role in the biosynthesis of all classes of hormonal steroids. The polypeptide is 3 beta-hydroxysteroid dehydrogenase/Delta 5--&gt;4-isomerase type 2 (HSD3B2) (Mesocricetus auratus (Golden hamster)).